The primary structure comprises 215 residues: 3-isopropylmalate dehydratase small subunit (215 aa).

This sequence belongs to the LeuD family. LeuD type 1 subfamily. In terms of assembly, heterodimer of LeuC and LeuD.

The enzyme catalyses (2R,3S)-3-isopropylmalate = (2S)-2-isopropylmalate. Its pathway is amino-acid biosynthesis; L-leucine biosynthesis; L-leucine from 3-methyl-2-oxobutanoate: step 2/4. Catalyzes the isomerization between 2-isopropylmalate and 3-isopropylmalate, via the formation of 2-isopropylmaleate. This is 3-isopropylmalate dehydratase small subunit from Xylella fastidiosa (strain M23).